Reading from the N-terminus, the 403-residue chain is Tyrosine--tRNA ligase (403 aa).

Positions 45–54 (PTAPDLHLGH) match the 'HIGH' region motif. Residues 229-233 (KMSKS) carry the 'KMSKS' region motif. Position 232 (Lys232) interacts with ATP. The S4 RNA-binding domain maps to 341 to 402 (VALCRLLAEA…GKRRFARITF (62 aa)).

The protein belongs to the class-I aminoacyl-tRNA synthetase family. TyrS type 2 subfamily. In terms of assembly, homodimer.

The protein resides in the cytoplasm. The catalysed reaction is tRNA(Tyr) + L-tyrosine + ATP = L-tyrosyl-tRNA(Tyr) + AMP + diphosphate + H(+). In terms of biological role, catalyzes the attachment of tyrosine to tRNA(Tyr) in a two-step reaction: tyrosine is first activated by ATP to form Tyr-AMP and then transferred to the acceptor end of tRNA(Tyr). The protein is Tyrosine--tRNA ligase of Geobacter sulfurreducens (strain ATCC 51573 / DSM 12127 / PCA).